Here is a 302-residue protein sequence, read N- to C-terminus: 4-hydroxy-tetrahydrodipicolinate synthase (302 aa).

Threonine 46 serves as a coordination point for pyruvate. Tyrosine 134 (proton donor/acceptor) is an active-site residue. Catalysis depends on lysine 162, which acts as the Schiff-base intermediate with substrate. Residue valine 204 coordinates pyruvate.

Belongs to the DapA family. As to quaternary structure, homotetramer; dimer of dimers.

The protein localises to the cytoplasm. The catalysed reaction is L-aspartate 4-semialdehyde + pyruvate = (2S,4S)-4-hydroxy-2,3,4,5-tetrahydrodipicolinate + H2O + H(+). It functions in the pathway amino-acid biosynthesis; L-lysine biosynthesis via DAP pathway; (S)-tetrahydrodipicolinate from L-aspartate: step 3/4. Its function is as follows. Catalyzes the condensation of (S)-aspartate-beta-semialdehyde [(S)-ASA] and pyruvate to 4-hydroxy-tetrahydrodipicolinate (HTPA). This chain is 4-hydroxy-tetrahydrodipicolinate synthase, found in Xylella fastidiosa (strain Temecula1 / ATCC 700964).